An 804-amino-acid polypeptide reads, in one-letter code: G-type lectin S-receptor-like serine/threonine-protein kinase At1g61490 (804 aa).

An N-terminal signal peptide occupies residues 1 to 24 (MGKKRIVFFACLLLFTVLLRFSYA). Positions 25 to 144 (GITTESPLSV…ASGRTLWESF (120 aa)) constitute a Bulb-type lectin domain. Residues 25–425 (GITTESPLSV…SELGGNKRNK (401 aa)) lie on the Extracellular side of the membrane. Residues asparagine 53, asparagine 94, asparagine 117, asparagine 134, asparagine 236, and asparagine 267 are each glycosylated (N-linked (GlcNAc...) asparagine). Residues 278–314 (PANSCDIYGVCGPFGLCIVSVPLKCKCLKGFVPHSTE) enclose the EGF-like domain. 2 cysteine pairs are disulfide-bonded: cysteine 282–cysteine 294 and cysteine 288–cysteine 302. Residues asparagine 320, asparagine 336, and asparagine 375 are each glycosylated (N-linked (GlcNAc...) asparagine). The PAN domain occupies 333–415 (CQGNSTGKDV…GEILSIRLAH (83 aa)). 2 disulfides stabilise this stretch: cysteine 368/cysteine 389 and cysteine 372/cysteine 378. The helical transmembrane segment at 426–446 (IIVASTVSLSLFVILTSAAFG) threads the bilayer. The Cytoplasmic segment spans residues 447 to 804 (FWRYRVKHKA…EMTQSMILGR (358 aa)). Residues 490-775 (FSLSNKLGQG…DLPSPKQPTF (286 aa)) enclose the Protein kinase domain. ATP contacts are provided by residues 496–504 (LGQGGFGSV) and lysine 518. A phosphoserine mark is found at serine 524 and serine 539. The caM-binding stretch occupies residues 579–596 (RKKLEVDWPKRFDIVQGI). The active-site Proton acceptor is the aspartate 615. Phosphoserine occurs at positions 619 and 632. Threonine 649 carries the post-translational modification Phosphothreonine. Serine 692 is modified (phosphoserine).

It belongs to the protein kinase superfamily. Ser/Thr protein kinase family.

It is found in the cell membrane. It catalyses the reaction L-seryl-[protein] + ATP = O-phospho-L-seryl-[protein] + ADP + H(+). The catalysed reaction is L-threonyl-[protein] + ATP = O-phospho-L-threonyl-[protein] + ADP + H(+). The sequence is that of G-type lectin S-receptor-like serine/threonine-protein kinase At1g61490 from Arabidopsis thaliana (Mouse-ear cress).